A 509-amino-acid chain; its full sequence is tRNA-2-methylthio-N(6)-dimethylallyladenosine synthase (509 aa).

The span at 1–15 (MNEQQRLASQQVNSS) shows a compositional bias: polar residues. A disordered region spans residues 1 to 26 (MNEQQRLASQQVNSSTKKEEKDYSKY). A compositionally biased stretch (basic and acidic residues) spans 16 to 25 (TKKEEKDYSK). The 119-residue stretch at 66-184 (RKFYIRTYGC…LPYILKDAMF (119 aa)) folds into the MTTase N-terminal domain. [4Fe-4S] cluster-binding residues include Cys75, Cys111, Cys145, Cys221, Cys225, and Cys228. The Radical SAM core domain occupies 207-437 (RRGDIKAWVN…NALVNKLAIE (231 aa)). One can recognise a TRAM domain in the interval 440–503 (DRYKGQIVEV…TWSLNGELVE (64 aa)).

The protein belongs to the methylthiotransferase family. MiaB subfamily. In terms of assembly, monomer. [4Fe-4S] cluster is required as a cofactor.

The protein localises to the cytoplasm. It carries out the reaction N(6)-dimethylallyladenosine(37) in tRNA + (sulfur carrier)-SH + AH2 + 2 S-adenosyl-L-methionine = 2-methylsulfanyl-N(6)-dimethylallyladenosine(37) in tRNA + (sulfur carrier)-H + 5'-deoxyadenosine + L-methionine + A + S-adenosyl-L-homocysteine + 2 H(+). Functionally, catalyzes the methylthiolation of N6-(dimethylallyl)adenosine (i(6)A), leading to the formation of 2-methylthio-N6-(dimethylallyl)adenosine (ms(2)i(6)A) at position 37 in tRNAs that read codons beginning with uridine. The sequence is that of tRNA-2-methylthio-N(6)-dimethylallyladenosine synthase from Bacillus cereus (strain ZK / E33L).